A 433-amino-acid chain; its full sequence is Probable exopolygalacturonase X (433 aa).

Residues 1 to 21 (MKLTQATTLLLSLGLSLPVEG) form the signal peptide. The segment at 30-54 (VGPKPPFRPLPASTPRNKTCQVQSN) is disordered. The segment covering 43 to 54 (TPRNKTCQVQSN) has biased composition (polar residues). Residues Asn46, Asn127, and Asn197 are each glycosylated (N-linked (GlcNAc...) asparagine). A PbH1 1 repeat occupies 229–250 (SSNIVIQNSVINNGDDCVSFKP). Asp243 acts as the Proton donor in catalysis. The cysteines at positions 245 and 262 are disulfide-linked. N-linked (GlcNAc...) asparagine glycosylation is found at Asn251 and Asn263. One copy of the PbH1 2 repeat lies at 252-272 (STEILVQNLHCNGSHGISVGS). Residue His266 is part of the active site. 5 N-linked (GlcNAc...) asparagine glycosylation sites follow: Asn290, Asn295, Asn327, Asn352, and Asn362. The stretch at 325-346 (VQNITYDKMYIENVDWAIEVTQ) is one PbH1 3 repeat. The stretch at 360-403 (PSNLTISDVYFNDLTGVTSGKNDPNVGTIICSSPDVCSGIHATN) is one PbH1 4 repeat. Cys390 and Cys396 are disulfide-bonded.

Belongs to the glycosyl hydrolase 28 family.

The protein localises to the secreted. The catalysed reaction is [(1-&gt;4)-alpha-D-galacturonosyl](n) + H2O = alpha-D-galacturonate + [(1-&gt;4)-alpha-D-galacturonosyl](n-1). In terms of biological role, specific in hydrolyzing the terminal glycosidic bond of polygalacturonic acid and oligogalacturonates. In Aspergillus flavus (strain ATCC 200026 / FGSC A1120 / IAM 13836 / NRRL 3357 / JCM 12722 / SRRC 167), this protein is Probable exopolygalacturonase X (pgaX).